The following is a 764-amino-acid chain: Acylamino-acid-releasing enzyme (764 aa).

Catalysis depends on charge relay system residues Ser-618, Asp-707, and His-739.

Belongs to the peptidase S9C family. Homotetramer.

The protein resides in the cytoplasm. The protein localises to the nucleus. It catalyses the reaction Cleavage of an N-acetyl or N-formyl amino acid from the N-terminus of a polypeptide.. With respect to regulation, strongly inhibited by the serine protease inhibitor diisopropyl fluorophosphate. Catalyzes the hydrolysis of the N-terminal peptide bond of an N-acetylated peptide to generate an N-acetylated amino acid and a peptide with a free N-terminus. Can degrade the glycated RuBisCO (ribulose-1,5-bisphosphate carboxylase/oxygenase) protein but not the native protein. May be involved in the elimination of glycated proteins. Plays a homeostatic role in sustaining the cytoplasmic antioxidative system. May contribute to the elimination of the oxidized proteins in the cytoplasm. The chain is Acylamino-acid-releasing enzyme from Arabidopsis thaliana (Mouse-ear cress).